The primary structure comprises 489 residues: Glutamate--tRNA ligase (489 aa).

The 'HIGH' region motif lies at 11 to 21; the sequence is PSPTGHLHIGN. The 'KMSKS' region motif lies at 252–256; that stretch reads KLSKR. Lys-255 serves as a coordination point for ATP.

It belongs to the class-I aminoacyl-tRNA synthetase family. Glutamate--tRNA ligase type 1 subfamily. Monomer.

It is found in the cytoplasm. The catalysed reaction is tRNA(Glu) + L-glutamate + ATP = L-glutamyl-tRNA(Glu) + AMP + diphosphate. In terms of biological role, catalyzes the attachment of glutamate to tRNA(Glu) in a two-step reaction: glutamate is first activated by ATP to form Glu-AMP and then transferred to the acceptor end of tRNA(Glu). This Oceanobacillus iheyensis (strain DSM 14371 / CIP 107618 / JCM 11309 / KCTC 3954 / HTE831) protein is Glutamate--tRNA ligase.